The chain runs to 205 residues: Urease accessory protein UreG (205 aa).

Residue 14-21 participates in GTP binding; sequence GPVGSGKT.

This sequence belongs to the SIMIBI class G3E GTPase family. UreG subfamily. As to quaternary structure, homodimer. UreD, UreF and UreG form a complex that acts as a GTP-hydrolysis-dependent molecular chaperone, activating the urease apoprotein by helping to assemble the nickel containing metallocenter of UreC. The UreE protein probably delivers the nickel.

Its subcellular location is the cytoplasm. Facilitates the functional incorporation of the urease nickel metallocenter. This process requires GTP hydrolysis, probably effectuated by UreG. This Escherichia coli protein is Urease accessory protein UreG.